Consider the following 316-residue polypeptide: ATP synthase gamma chain (316 aa).

It belongs to the ATPase gamma chain family. F-type ATPases have 2 components, CF(1) - the catalytic core - and CF(0) - the membrane proton channel. CF(1) has five subunits: alpha(3), beta(3), gamma(1), delta(1), epsilon(1). CF(0) has three main subunits: a, b and c.

Its subcellular location is the cellular thylakoid membrane. Functionally, produces ATP from ADP in the presence of a proton gradient across the membrane. The gamma chain is believed to be important in regulating ATPase activity and the flow of protons through the CF(0) complex. This Prochlorococcus marinus (strain MIT 9301) protein is ATP synthase gamma chain.